The primary structure comprises 111 residues: MHGERPTLGDIVLNLHPEPVCLNCNEQLDSSDSEDDHEQDQLDSLHSREREQPTQQDLQVNLQSFKVVTRCVFCQCLVRLAVHCSITDITQFQQLLMGTLHIVCPNCAATE.

Positions 1–44 (MHGERPTLGDIVLNLHPEPVCLNCNEQLDSSDSEDDHEQDQLDS) are E7 terminal domain. Residues 22-26 (LNCNE) carry the LXCXE motif; interaction with host RB1 and TMEM173/STING motif. A disordered region spans residues 28-54 (LDSSDSEDDHEQDQLDSLHSREREQPT). The span at 29 to 38 (DSSDSEDDHE) shows a compositional bias: acidic residues. Basic and acidic residues predominate over residues 39 to 52 (QDQLDSLHSREREQ). Residues 71-107 (CVFCQCLVRLAVHCSITDITQFQQLLMGTLHIVCPNC) fold into a zinc finger. The Nuclear export signal signature appears at 89–97 (ITQFQQLLM).

This sequence belongs to the papillomaviridae E7 protein family. As to quaternary structure, homodimer. Homooligomer. Interacts with host RB1; this interaction induces dissociation of RB1-E2F1 complex thereby disrupting RB1 activity. Interacts with host EP300; this interaction represses EP300 transcriptional activity. Interacts with protein E2; this interaction inhibits E7 oncogenic activity. Interacts with host TMEM173/STING; this interaction impairs the ability of TMEM173/STING to sense cytosolic DNA and promote the production of type I interferon (IFN-alpha and IFN-beta). Post-translationally, highly phosphorylated.

It is found in the host cytoplasm. The protein localises to the host nucleus. In terms of biological role, plays a role in viral genome replication by driving entry of quiescent cells into the cell cycle. Stimulation of progression from G1 to S phase allows the virus to efficiently use the cellular DNA replicating machinery to achieve viral genome replication. E7 protein has both transforming and trans-activating activities. Induces the disassembly of the E2F1 transcription factor from RB1, with subsequent transcriptional activation of E2F1-regulated S-phase genes. Interferes with host histone deacetylation mediated by HDAC1 and HDAC2, leading to transcription activation. Also plays a role in the inhibition of both antiviral and antiproliferative functions of host interferon alpha. Interaction with host TMEM173/STING impairs the ability of TMEM173/STING to sense cytosolic DNA and promote the production of type I interferon (IFN-alpha and IFN-beta). In Homo sapiens (Human), this protein is Protein E7.